A 547-amino-acid chain; its full sequence is CTP synthase (547 aa).

The tract at residues 1 to 265 (MARYIFITGG…DQAVLDAFQI (265 aa)) is amidoligase domain. Ser-13 provides a ligand contact to CTP. Ser-13 is a UTP binding site. ATP contacts are provided by residues 14–19 (SLGKGL) and Asp-71. Residues Asp-71 and Glu-139 each contribute to the Mg(2+) site. CTP is bound by residues 146–148 (DIE), 186–191 (KTKPTQ), and Lys-222. Residues 186–191 (KTKPTQ) and Lys-222 contribute to the UTP site. A Glutamine amidotransferase type-1 domain is found at 291-546 (RIAVVGKYTQ…IRAAMDNERL (256 aa)). Residue Gly-352 coordinates L-glutamine. Cys-379 functions as the Nucleophile; for glutamine hydrolysis in the catalytic mechanism. L-glutamine-binding positions include 380–383 (LGMQ), Glu-403, and Arg-474. Residues His-519 and Glu-521 contribute to the active site.

This sequence belongs to the CTP synthase family. Homotetramer.

It carries out the reaction UTP + L-glutamine + ATP + H2O = CTP + L-glutamate + ADP + phosphate + 2 H(+). The catalysed reaction is L-glutamine + H2O = L-glutamate + NH4(+). The enzyme catalyses UTP + NH4(+) + ATP = CTP + ADP + phosphate + 2 H(+). The protein operates within pyrimidine metabolism; CTP biosynthesis via de novo pathway; CTP from UDP: step 2/2. With respect to regulation, allosterically activated by GTP, when glutamine is the substrate; GTP has no effect on the reaction when ammonia is the substrate. The allosteric effector GTP functions by stabilizing the protein conformation that binds the tetrahedral intermediate(s) formed during glutamine hydrolysis. Inhibited by the product CTP, via allosteric rather than competitive inhibition. In terms of biological role, catalyzes the ATP-dependent amination of UTP to CTP with either L-glutamine or ammonia as the source of nitrogen. Regulates intracellular CTP levels through interactions with the four ribonucleotide triphosphates. In Paracoccus denitrificans (strain Pd 1222), this protein is CTP synthase.